A 218-amino-acid polypeptide reads, in one-letter code: Large ribosomal subunit protein uL3 (218 aa).

It belongs to the universal ribosomal protein uL3 family. As to quaternary structure, part of the 50S ribosomal subunit. Forms a cluster with proteins L14 and L19.

In terms of biological role, one of the primary rRNA binding proteins, it binds directly near the 3'-end of the 23S rRNA, where it nucleates assembly of the 50S subunit. The sequence is that of Large ribosomal subunit protein uL3 from Rhodococcus jostii (strain RHA1).